Consider the following 239-residue polypeptide: Ribosomal RNA small subunit methyltransferase G (239 aa).

S-adenosyl-L-methionine is bound by residues G77, F82, 128–129, and R147; that span reads AE. The disordered stretch occupies residues 216-239; sequence EKKKQTPKKYPRKPGTPNKSPIEG.

Belongs to the methyltransferase superfamily. RNA methyltransferase RsmG family.

The protein localises to the cytoplasm. Functionally, specifically methylates the N7 position of guanine in position 535 of 16S rRNA. This is Ribosomal RNA small subunit methyltransferase G from Bacillus pumilus (strain SAFR-032).